Here is a 100-residue protein sequence, read N- to C-terminus: Sodium-influx-stimulating peptide (100 aa).

An N-terminal signal peptide occupies residues Met1–Ser23.

Three disulfide bonds are present. As to expression, expressed by the yellow cells, peptidergic (neuroendocrine) neurons of the central nervous system.

Its function is as follows. Stimulates integumental Na(+) uptake. Controls the activity of sodium pumps in the integument, pericardium, ureter and nephridial gland. In Lymnaea stagnalis (Great pond snail), this protein is Sodium-influx-stimulating peptide (SIS).